The sequence spans 538 residues: Cytochrome P450 monooxygenase astC (538 aa).

The chain crosses the membrane as a helical span at residues 18 to 38 (ALMLPALVGCALLIYRAFFAI). Cys-481 contacts heme.

The protein belongs to the cytochrome P450 family. Heme is required as a cofactor.

It is found in the membrane. The protein operates within secondary metabolite biosynthesis; terpenoid biosynthesis. Functionally, cytochrome P450 monooxygenase; part of the gene cluster that mediates the biosynthesis of the sesquiterpenoid aspterric acid (AA), an inhibitor of dihydroxy-acid dehydratase (DHAD) effective as an herbicide. AstC catalyzes the third and last step within the pathway and converts the alpha-epoxy carboxylate intermediate produced by the cytochrome P450 monooxygenase astC from (-)daucane into the tricyclic aspterric acid. In Aspergillus terreus (strain NIH 2624 / FGSC A1156), this protein is Cytochrome P450 monooxygenase astC.